Reading from the N-terminus, the 225-residue chain is Cytidylate kinase (225 aa).

11–19 (GPAAAGKST) contributes to the ATP binding site.

This sequence belongs to the cytidylate kinase family. Type 1 subfamily.

The protein resides in the cytoplasm. It carries out the reaction CMP + ATP = CDP + ADP. The catalysed reaction is dCMP + ATP = dCDP + ADP. The chain is Cytidylate kinase from Bacillus cereus (strain ATCC 10987 / NRS 248).